We begin with the raw amino-acid sequence, 287 residues long: Putative sugar uptake protein LJ_0170 (287 aa).

10 helical membrane-spanning segments follow: residues 4-23 (VYLFLPAIGWGLMPLVIASV), 28-50 (VYNQIVGTVAASFIFGAIVMAIM), 56-78 (WSLFLLSALGGACWVIGQVGQYI), 91-108 (ISTGLQLIGVPLVGVLAF), 118-137 (LYGFIGILVLIIGVVLTSFT), 150-169 (VSTIILLVLTSLGYITSSSI), 179-198 (SIFFGQTFGMLVAVFIYTLV), 211-230 (VQSGGAGILYAIAALAYILS), 240-259 (FVISQLCVVISTLGGLIFLH), and 266-285 (GLIFTIAGLILIIGGAMLTT).

The protein belongs to the GRP transporter (TC 2.A.7.5) family.

Its subcellular location is the cell membrane. The polypeptide is Putative sugar uptake protein LJ_0170 (Lactobacillus johnsonii (strain CNCM I-12250 / La1 / NCC 533)).